The sequence spans 524 residues: Maturase K (524 aa).

Belongs to the intron maturase 2 family. MatK subfamily.

It localises to the plastid. The protein resides in the chloroplast. Functionally, usually encoded in the trnK tRNA gene intron. Probably assists in splicing its own and other chloroplast group II introns. This chain is Maturase K, found in Welwitschia mirabilis (Tree tumbo).